A 1003-amino-acid chain; its full sequence is Cation-transporting ATPase HMA5 (1003 aa).

A disordered region spans residues 6–25 (LSAVAGGGRPAAAGGGGDEM). A compositionally biased stretch (gly residues) spans 10–22 (AGGGRPAAAGGGG). 3 consecutive HMA domains span residues 51 to 117 (EEAH…FDAE), 133 to 199 (LSAQ…FEAA), and 207 to 273 (DKIL…NGRL). Cys-62, Cys-65, Cys-144, and Cys-147 together coordinate Cu cation. Helical transmembrane passes span 302 to 322 (SLFL…IPFI), 331 to 351 (GPFH…QFVV), 372 to 392 (VLVV…LLYG), 396 to 416 (GFHP…VLFG), 562 to 582 (IFVP…FLCG), 599 to 619 (FVFS…CALG), 938 to 958 (FFAM…LFPF), and 966 to 986 (WLAG…SLLL).

The protein belongs to the cation transport ATPase (P-type) (TC 3.A.3) family. Type IB subfamily. Expressed in root vascular cylinder, vascular bundles and mesophyll cells of leaf blades, and anther walls and microspores of stamens.

The protein localises to the cell membrane. Its function is as follows. Metal efflux transporter that may play a role in detoxification of heavy metals, such as zinc, copper, lead and cadmium, especially in the shoots. The protein is Cation-transporting ATPase HMA5 of Oryza sativa subsp. japonica (Rice).